The following is a 417-amino-acid chain: D-glycerate 2-kinase (417 aa).

It belongs to the glycerate kinase type-1 family. As to quaternary structure, homodimer. Requires Mg(2+) as cofactor.

The enzyme catalyses (R)-glycerate + ATP = (2R)-2-phosphoglycerate + ADP + H(+). Its function is as follows. Involved in the degradation of serine via 3-hydroxypyruvate. Catalyzes the ATP-dependent phosphorylation of D-glycerate to 2-phosphoglycerate. This Thermotoga maritima (strain ATCC 43589 / DSM 3109 / JCM 10099 / NBRC 100826 / MSB8) protein is D-glycerate 2-kinase.